The following is a 546-amino-acid chain: Chaperonin GroEL 1 (546 aa).

ATP-binding positions include 29–32 (TIGP), 86–90 (DGTTT), Gly413, 477–479 (NAA), and Asp493. Residues 523–546 (PAEPAPQDGHGHGHGHSHPQGPGF) are disordered.

This sequence belongs to the chaperonin (HSP60) family. As to quaternary structure, forms a cylinder of 14 subunits composed of two heptameric rings stacked back-to-back. Interacts with the co-chaperonin GroES.

The protein localises to the cytoplasm. The catalysed reaction is ATP + H2O + a folded polypeptide = ADP + phosphate + an unfolded polypeptide.. Functionally, together with its co-chaperonin GroES, plays an essential role in assisting protein folding. The GroEL-GroES system forms a nano-cage that allows encapsulation of the non-native substrate proteins and provides a physical environment optimized to promote and accelerate protein folding. In Frankia casuarinae (strain DSM 45818 / CECT 9043 / HFP020203 / CcI3), this protein is Chaperonin GroEL 1.